The chain runs to 494 residues: NAD(P)H-quinone oxidoreductase subunit 2 B, chloroplastic (494 aa).

The next 14 membrane-spanning stretches (helical) occupy residues 13–33 (SILP…IDLI), 39–59 (TPWL…ILLF), 81–101 (IFRL…IDYI), 107–127 (ALTE…FLCC), 131–151 (LVTI…LSGY), 166–186 (LLMG…LYGL), 211–231 (MFIS…LVPF), 243–263 (PTPV…ALAT), 277–297 (WHLL…FIAV), 305–325 (MLAY…IAAE), 336–356 (YMLI…LFGL), 378–398 (LSLV…GFFG), 411–433 (LYFL…LKII), and 468–488 (MIIC…IIAI).

This sequence belongs to the complex I subunit 2 family. NDH is composed of at least 16 different subunits, 5 of which are encoded in the nucleus.

The protein localises to the plastid. It localises to the chloroplast thylakoid membrane. The enzyme catalyses a plastoquinone + NADH + (n+1) H(+)(in) = a plastoquinol + NAD(+) + n H(+)(out). The catalysed reaction is a plastoquinone + NADPH + (n+1) H(+)(in) = a plastoquinol + NADP(+) + n H(+)(out). Its function is as follows. NDH shuttles electrons from NAD(P)H:plastoquinone, via FMN and iron-sulfur (Fe-S) centers, to quinones in the photosynthetic chain and possibly in a chloroplast respiratory chain. The immediate electron acceptor for the enzyme in this species is believed to be plastoquinone. Couples the redox reaction to proton translocation, and thus conserves the redox energy in a proton gradient. The chain is NAD(P)H-quinone oxidoreductase subunit 2 B, chloroplastic from Angiopteris evecta (Mule's foot fern).